Here is a 245-residue protein sequence, read N- to C-terminus: NAD-dependent protein deacetylase (245 aa).

A Deacetylase sirtuin-type domain is found at 1-245; it reads MLLLDKINEL…SIGKVLETVI (245 aa). 8 residues coordinate NAD(+): A26, T30, F37, R38, Q107, I109, D110, and H125. F37 contacts nicotinamide. 2 residues coordinate nicotinamide: I109 and D110. Residue H125 is the Proton acceptor of the active site. Residues C133, C136, C155, and C158 each coordinate Zn(2+). Residues T196, S197, N219, and I237 each coordinate NAD(+).

It belongs to the sirtuin family. Class U subfamily. Zn(2+) is required as a cofactor.

Its subcellular location is the cytoplasm. The catalysed reaction is N(6)-acetyl-L-lysyl-[protein] + NAD(+) + H2O = 2''-O-acetyl-ADP-D-ribose + nicotinamide + L-lysyl-[protein]. In terms of biological role, NAD-dependent protein deacetylase which modulates the activities of several enzymes which are inactive in their acetylated form. This is NAD-dependent protein deacetylase from Clostridium acetobutylicum (strain ATCC 824 / DSM 792 / JCM 1419 / IAM 19013 / LMG 5710 / NBRC 13948 / NRRL B-527 / VKM B-1787 / 2291 / W).